The sequence spans 312 residues: MAVSAIFSQDSNSKRLLIAFAITTLFMVTEAIGGWLSGSLALLADTGHMLTDSAALFIALMAVHFSQRKPDPRHTFGYLRLTTLAAFVNAAALLLIVILIVWEAVHRFFSPHEVMGTPMLIIAIAGLLANIFCFWILHKGEEEKNINVRAAALHVLSDLLGSVGAMIAAIVILTTGWTPIDPILSVLVSVLILRNAWRLLKESFHELLEGAPQEIDINKLRKDLCTNIYEVRNIHHVHLWQVGEQRLMTLHAQVIPPLDHDALLQRIQDYLLHHYRISHATVQMEYQHCGTPDCGINQAAPADGHHRHHHHE.

6 consecutive transmembrane segments (helical) span residues 16-36 (LLIA…GGWL), 40-60 (LALL…FIAL), 81-101 (LTTL…ILIV), 117-137 (TPML…FWIL), 153-173 (LHVL…IVIL), and 177-197 (WTPI…RNAW).

This sequence belongs to the cation diffusion facilitator (CDF) transporter (TC 2.A.4) family. SLC30A subfamily.

The protein resides in the cell inner membrane. In terms of biological role, involved in zinc efflux across the cytoplasmic membrane, thus reducing zinc accumulation in the cytoplasm and rendering bacteria more resistant to zinc. It may contribute to zinc homeostasis at low concentrations of zinc. This is Zinc transporter ZitB from Yersinia pseudotuberculosis serotype I (strain IP32953).